Consider the following 481-residue polypeptide: MDTKGSTVTISSSTPPQNCSGNTNVRTNSSNKSCYHDVQSTGHALQTPQGQGCRPSPCLYRCPNYLIRTYSFHPCPDDCSRCSDGINSHEKETMQILNERLASYLEKVRMLEGENADLEDKIQEECSKTLPILCPDYLSYYTTIEQLQQKILCTKAENSRLVSQIDNTKLAADDLRAKYEAELSLRQLVEADANGLKQILDALTLSKADLEARVQSLTEELLCLKTNHEEEINSLQCQLGDRINIEVTAAPSVDLNQILQKMRCQYESIVETNRKDVEEWFNTQMEELNQQVVSSSQQQQCCQKDIIELRRTISALEVELQAQHRMRDSQECILAETEARYTALLAQIQSLIHNLEAQVAEIRSALQRQNQEYEVLLDIKSRLECEIATYRSLLESLDGRLPCNPCTTTWEPSCQARAMECLTPVYTSISLPGIHKPCRASGPPSRILVKICTITKEIKDGKVISSHEHVQPCYITRPAKV.

Residues 1–25 (MDTKGSTVTISSSTPPQNCSGNTNV) form a disordered region. The segment at 1–90 (MDTKGSTVTI…RCSDGINSHE (90 aa)) is head. An IF rod domain is found at 90-401 (EKETMQILNE…SLLESLDGRL (312 aa)). The tract at residues 91 to 125 (KETMQILNERLASYLEKVRMLEGENADLEDKIQEE) is coil 1A. The interval 126-136 (CSKTLPILCPD) is linker 1. A coil 1B region spans residues 137–237 (YLSYYTTIEQ…HEEEINSLQC (101 aa)). Residues 238-253 (QLGDRINIEVTAAPSV) are linker 12. The tract at residues 254-397 (DLNQILQKMR…ATYRSLLESL (144 aa)) is coil 2. The segment at 398–481 (DGRLPCNPCT…PCYITRPAKV (84 aa)) is tail.

Belongs to the intermediate filament family. As to quaternary structure, heterotetramer of two type I and two type II keratins.

Its function is as follows. May play a role in late hair differentiation. The sequence is that of Keratin, type I cytoskeletal 39 (Krt39) from Rattus norvegicus (Rat).